The primary structure comprises 529 residues: MLHNRMTTAFERSKEQEHEAAKNEIPSFQVFIERRDFLGAITVLKFLKSTRNTAEVGNADLWIAYCNFHLGRHEEALEIYTALKKSKNPPLDAHTLDLYRAICMLYLGQMGDARELATTLPPTPLSNRLLFHACSRLLDEESLVTYHTKLRNVSADQMALAAVHFLRTHYQQALECYEEVLQVQPECFAIYMHMALCYYKLGDYLKSEEFLMLYRENAEDSLTSLNLYAATKFRQGKMAEALKILEELQNDETIVGLPIFKHNKCLYTEMNAAVHILPPLVGIVSEARQNLVKLYIEKGQYEDAYKVVQSFEPAVSAEYTLKAAAYAYYGQTVQDMAVLQYAQAAYSTVGQSDADRDTVLGRRAMAAAYFLTGEFEEASMYLESIADIPKESEDSFMLNYSLCLAATCKVTEALERLMSVMGSTNFTPVHRTWLGRLLIRAQRSAEAFDLYRDAEKNSLQTILLMKVIANECFAAGEYQYAERAAAILVDLDKASKDHYIMIQKACIAAMELIRRGKTITPPELVYETE.

Positions 1 to 21 are disordered; it reads MLHNRMTTAFERSKEQEHEAA. The span at 11–21 shows a compositional bias: basic and acidic residues; sequence ERSKEQEHEAA. TPR repeat units lie at residues 57–90, 154–187, 189–221, 285–321, 359–392, and 428–461; these read GNAD…KNPP, SADQ…QPEC, AIYM…AEDS, SEAR…EYTL, VLGR…PKES, and PVHR…SLQT.

It belongs to the IFT56 family.

Its subcellular location is the cell projection. The protein localises to the cilium. It is found in the flagellum. It localises to the cytoplasm. The protein resides in the cytoskeleton. Its subcellular location is the flagellum axoneme. The protein localises to the flagellum basal body. In terms of biological role, component of the intraflagellar transport complex B (IFT-B) involved in flagellar assembly. This chain is Intraflagellar transport protein 56, found in Giardia intestinalis (strain ATCC 50803 / WB clone C6) (Giardia lamblia).